The following is a 153-amino-acid chain: ORM1-like protein 3 (153 aa).

Residues 1–17 form an important for ceramide level-sensing region; sequence MNVGTAHSEVNPNTRVM. Residues 1 to 21 are Cytoplasmic-facing; sequence MNVGTAHSEVNPNTRVMNSRG. The next 2 helical transmembrane spans lie at 22-42 and 43-63; these read IWLS…SIPF and VSVP…MYIF. Over 64 to 94 the chain is Cytoplasmic; sequence LHTVKGTPFETPDQGKARLLTHWEQMDYGVQ. The helical transmembrane segment at 95–117 threads the bilayer; that stretch reads FTASRKFLTITPIVLYFLTSFYT. The Extracellular portion of the chain corresponds to 118–121; it reads KYDQ. A helical transmembrane segment spans residues 122-142; it reads VHFILNTVSLMTVLIPKLPQL. Pro-137 is subject to Hydroxyproline. Topologically, residues 143–153 are cytoplasmic; it reads HGVRIFGINKY.

It belongs to the ORM family. Ceramide-sensitive subunit of the serine palmitoyltransferase (SPT) complex, which is also composed of SPTLC1, SPTLC2/3 and SPTSSA/B. When hydroxylated at Pro-137, ubiquitinated via 'Lys-48'-linkage, leading to proteasomal degradation. In endothelial cells, ORMDL3 proteasomal degradation is controlled by the sphingosine 1-phosphate receptor signaling pathway.

It is found in the endoplasmic reticulum membrane. Functionally, plays an essential role in the homeostatic regulation of sphingolipid de novo biosynthesis by modulating the activity of the serine palmitoyltransferase (SPT) in response to ceramide levels. When complexed to SPT, the binding of ceramides to its N-terminus stabilizes a conformation that block SPT substrate entry, hence preventing SPT catalytic activity. Through this mechanism, maintains ceramide levels at sufficient concentrations for the production of complex sphingolipids, but which prevents the accumulation of ceramides to levels that trigger apoptosis. This is ORM1-like protein 3 (Ormdl3) from Mus musculus (Mouse).